The chain runs to 97 residues: uncharacterized protein (97 aa).

Positions 2–95 constitute a Stress-response A/B barrel domain; the sequence is IRHLVLFKLN…EFATWVIADY (94 aa).

This is an uncharacterized protein from Streptomyces coelicolor (strain ATCC BAA-471 / A3(2) / M145).